Consider the following 387-residue polypeptide: S-adenosylmethionine synthase (387 aa).

Position 15 (histidine 15) interacts with ATP. Aspartate 17 contacts Mg(2+). Residue glutamate 43 coordinates K(+). 2 residues coordinate L-methionine: glutamate 56 and glutamine 99. The interval glutamine 99–alanine 109 is flexible loop. ATP-binding positions include aspartate 166 to lysine 168, arginine 232 to phenylalanine 233, aspartate 241, arginine 247 to lysine 248, alanine 264, and lysine 268. An L-methionine-binding site is contributed by aspartate 241. Lysine 272 contacts L-methionine.

The protein belongs to the AdoMet synthase family. In terms of assembly, homotetramer; dimer of dimers. It depends on Mg(2+) as a cofactor. K(+) is required as a cofactor.

Its subcellular location is the cytoplasm. The enzyme catalyses L-methionine + ATP + H2O = S-adenosyl-L-methionine + phosphate + diphosphate. The protein operates within amino-acid biosynthesis; S-adenosyl-L-methionine biosynthesis; S-adenosyl-L-methionine from L-methionine: step 1/1. Functionally, catalyzes the formation of S-adenosylmethionine (AdoMet) from methionine and ATP. The overall synthetic reaction is composed of two sequential steps, AdoMet formation and the subsequent tripolyphosphate hydrolysis which occurs prior to release of AdoMet from the enzyme. The polypeptide is S-adenosylmethionine synthase (Dechloromonas aromatica (strain RCB)).